An 87-amino-acid chain; its full sequence is Small ribosomal subunit protein uS17 (87 aa).

The protein belongs to the universal ribosomal protein uS17 family. Part of the 30S ribosomal subunit.

Its function is as follows. One of the primary rRNA binding proteins, it binds specifically to the 5'-end of 16S ribosomal RNA. The protein is Small ribosomal subunit protein uS17 of Listeria innocua serovar 6a (strain ATCC BAA-680 / CLIP 11262).